Consider the following 206-residue polypeptide: Thiamine-phosphate synthase (206 aa).

4-amino-2-methyl-5-(diphosphooxymethyl)pyrimidine contacts are provided by residues 35 to 39 (QLRHK) and N67. The Mg(2+) site is built by D68 and D87. A 4-amino-2-methyl-5-(diphosphooxymethyl)pyrimidine-binding site is contributed by S106. 132 to 134 (TGS) is a binding site for 2-[(2R,5Z)-2-carboxy-4-methylthiazol-5(2H)-ylidene]ethyl phosphate. A 4-amino-2-methyl-5-(diphosphooxymethyl)pyrimidine-binding site is contributed by K135. A 2-[(2R,5Z)-2-carboxy-4-methylthiazol-5(2H)-ylidene]ethyl phosphate-binding site is contributed by G163.

This sequence belongs to the thiamine-phosphate synthase family. It depends on Mg(2+) as a cofactor.

It carries out the reaction 2-[(2R,5Z)-2-carboxy-4-methylthiazol-5(2H)-ylidene]ethyl phosphate + 4-amino-2-methyl-5-(diphosphooxymethyl)pyrimidine + 2 H(+) = thiamine phosphate + CO2 + diphosphate. The enzyme catalyses 2-(2-carboxy-4-methylthiazol-5-yl)ethyl phosphate + 4-amino-2-methyl-5-(diphosphooxymethyl)pyrimidine + 2 H(+) = thiamine phosphate + CO2 + diphosphate. It catalyses the reaction 4-methyl-5-(2-phosphooxyethyl)-thiazole + 4-amino-2-methyl-5-(diphosphooxymethyl)pyrimidine + H(+) = thiamine phosphate + diphosphate. The protein operates within cofactor biosynthesis; thiamine diphosphate biosynthesis; thiamine phosphate from 4-amino-2-methyl-5-diphosphomethylpyrimidine and 4-methyl-5-(2-phosphoethyl)-thiazole: step 1/1. In terms of biological role, condenses 4-methyl-5-(beta-hydroxyethyl)thiazole monophosphate (THZ-P) and 2-methyl-4-amino-5-hydroxymethyl pyrimidine pyrophosphate (HMP-PP) to form thiamine monophosphate (TMP). This Chlorobium phaeobacteroides (strain DSM 266 / SMG 266 / 2430) protein is Thiamine-phosphate synthase.